Consider the following 225-residue polypeptide: Ribonuclease 3 (225 aa).

Positions 4–127 constitute an RNase III domain; the sequence is IEKLEQSLTY…IIGAIHLEAG (124 aa). Mg(2+) is bound at residue Glu40. Asp44 is a catalytic residue. Mg(2+) contacts are provided by Asp113 and Glu116. Glu116 is a catalytic residue. One can recognise a DRBM domain in the interval 154-223; that stretch reads DYKTKLQEIT…AKIALEKLGS (70 aa).

This sequence belongs to the ribonuclease III family. As to quaternary structure, homodimer. It depends on Mg(2+) as a cofactor.

The protein localises to the cytoplasm. It catalyses the reaction Endonucleolytic cleavage to 5'-phosphomonoester.. Digests double-stranded RNA. Involved in the processing of primary rRNA transcript to yield the immediate precursors to the large and small rRNAs (23S and 16S). Processes some mRNAs, and tRNAs when they are encoded in the rRNA operon. Processes pre-crRNA and tracrRNA of type II CRISPR loci if present in the organism. The protein is Ribonuclease 3 of Campylobacter jejuni subsp. doylei (strain ATCC BAA-1458 / RM4099 / 269.97).